The following is a 309-amino-acid chain: Prepilin leader peptidase/N-methyltransferase (309 aa).

Residues 35–55 (MQLAFAIVLGLVVGSFINVVV) traverse the membrane as a helical segment. Positions 96, 99, 121, and 124 each coordinate Zn(2+). The next 6 helical transmembrane spans lie at 147-167 (LALFGPSGAALAAFGLCAALL), 183-203 (LTLPLLWAGLCVNLWGTFASL), 207-227 (VIGAIAGYLFLWCILWLFKLL), 230-250 (IEGIGYGDLKLLAALGAWLGW), 253-273 (LPQVVLIAAVAGAAVGLVATW), and 288-308 (FLAAGGAATLFFGTPFYLLLG).

It belongs to the peptidase A24 family. Requires Zn(2+) as cofactor.

Its subcellular location is the cell inner membrane. It catalyses the reaction Typically cleaves a -Gly-|-Phe- bond to release an N-terminal, basic peptide of 5-8 residues from type IV prepilin, and then N-methylates the new N-terminal amino group, the methyl donor being S-adenosyl-L-methionine.. Functionally, plays an essential role in type IV pili and type II pseudopili formation by proteolytically removing the leader sequence from substrate proteins and subsequently monomethylating the alpha-amino group of the newly exposed N-terminal phenylalanine. The sequence is that of Prepilin leader peptidase/N-methyltransferase (gspO) from Burkholderia pseudomallei (strain K96243).